Reading from the N-terminus, the 170-residue chain is Peptidyl-prolyl cis-trans isomerase ESS1 (170 aa).

Positions 9–43 (TGLPTPWTVRYSKSKKREYFFNPETKHSQWEEPEG) constitute a WW domain. The tract at residues 30–53 (NPETKHSQWEEPEGTNKDQLHKHL) is disordered. Residues 32-53 (ETKHSQWEEPEGTNKDQLHKHL) show a composition bias toward basic and acidic residues. The PpiC domain maps to 57 to 170 (PVRVRCLHIL…SGVHVIKRVG (114 aa)). S161 carries the phosphoserine modification.

Belongs to the PpiC/parvulin rotamase family. Interacts with the RNA polymerase II largest subunit (RPB1) and with the SIN1-RDP3 HDAC subunit SIN3.

The protein localises to the cytoplasm. Its subcellular location is the nucleus. It catalyses the reaction [protein]-peptidylproline (omega=180) = [protein]-peptidylproline (omega=0). Inhibited by 5-hydroxy-1,4-naphthoquinone (juglone), but not by FK506 or cyclosporin A. Its function is as follows. Essential PPIase specific for phosphoserine and phosphothreonine N-terminal to the proline residue. Required for efficient pre-mRNA 3'-end processing and transcription termination, probably by inducing conformational changes by proline-directed isomerization in the C-terminal domain (CTD) of RPB1, thereby altering cofactor binding with the RNA polymerase II transcription complex. Also targets the SIN3-RPD3 histone deacetylase complex (HDAC). This is Peptidyl-prolyl cis-trans isomerase ESS1 (ESS1) from Saccharomyces cerevisiae (strain ATCC 204508 / S288c) (Baker's yeast).